Reading from the N-terminus, the 223-residue chain is Peptidyl-prolyl cis-trans isomerase FKBP16-3, chloroplastic (223 aa).

A chloroplast-targeting transit peptide spans 1 to 36 (MAASSPSLLLPLGSASRNGLTTKNPNSSRYIAARVI). The transit peptide at 37–76 (ASETREQSCKISNLSSRREAMLLVLGVSGGLSMSSLAAYA) directs the protein to the thylakoid. Residues 124–216 (GFQVAANYVA…IFDVSLEFIP (93 aa)) form the PPIase FKBP-type domain.

This sequence belongs to the FKBP-type PPIase family.

It is found in the plastid. The protein resides in the chloroplast thylakoid lumen. The enzyme catalyses [protein]-peptidylproline (omega=180) = [protein]-peptidylproline (omega=0). In terms of biological role, PPIases accelerate the folding of proteins. It catalyzes the cis-trans isomerization of proline imidic peptide bonds in oligopeptides. This Arabidopsis thaliana (Mouse-ear cress) protein is Peptidyl-prolyl cis-trans isomerase FKBP16-3, chloroplastic (FKBP16-3).